The sequence spans 447 residues: Probable glycine dehydrogenase (decarboxylating) subunit 1 (447 aa).

The protein belongs to the GcvP family. N-terminal subunit subfamily. In terms of assembly, the glycine cleavage system is composed of four proteins: P, T, L and H. In this organism, the P 'protein' is a heterodimer of two subunits.

It carries out the reaction N(6)-[(R)-lipoyl]-L-lysyl-[glycine-cleavage complex H protein] + glycine + H(+) = N(6)-[(R)-S(8)-aminomethyldihydrolipoyl]-L-lysyl-[glycine-cleavage complex H protein] + CO2. Its function is as follows. The glycine cleavage system catalyzes the degradation of glycine. The P protein binds the alpha-amino group of glycine through its pyridoxal phosphate cofactor; CO(2) is released and the remaining methylamine moiety is then transferred to the lipoamide cofactor of the H protein. The polypeptide is Probable glycine dehydrogenase (decarboxylating) subunit 1 (Macrococcus caseolyticus (strain JCSC5402) (Macrococcoides caseolyticum)).